The chain runs to 160 residues: SsrA-binding protein (160 aa).

Residues 131–160 (KKEYDKRHTERERDSDRELQRAVRTKGKDD) are disordered.

The protein belongs to the SmpB family.

Its subcellular location is the cytoplasm. In terms of biological role, required for rescue of stalled ribosomes mediated by trans-translation. Binds to transfer-messenger RNA (tmRNA), required for stable association of tmRNA with ribosomes. tmRNA and SmpB together mimic tRNA shape, replacing the anticodon stem-loop with SmpB. tmRNA is encoded by the ssrA gene; the 2 termini fold to resemble tRNA(Ala) and it encodes a 'tag peptide', a short internal open reading frame. During trans-translation Ala-aminoacylated tmRNA acts like a tRNA, entering the A-site of stalled ribosomes, displacing the stalled mRNA. The ribosome then switches to translate the ORF on the tmRNA; the nascent peptide is terminated with the 'tag peptide' encoded by the tmRNA and targeted for degradation. The ribosome is freed to recommence translation, which seems to be the essential function of trans-translation. The polypeptide is SsrA-binding protein (Pseudomonas syringae pv. tomato (strain ATCC BAA-871 / DC3000)).